We begin with the raw amino-acid sequence, 480 residues long: Glutamate--tRNA ligase (480 aa).

The 'HIGH' region signature appears at 8–18 (PSPTGPLHIGG). The 'KMSKS' region signature appears at 249–253 (KMSKR). ATP is bound at residue K252.

It belongs to the class-I aminoacyl-tRNA synthetase family. Glutamate--tRNA ligase type 1 subfamily. In terms of assembly, monomer.

The protein localises to the cytoplasm. It carries out the reaction tRNA(Glu) + L-glutamate + ATP = L-glutamyl-tRNA(Glu) + AMP + diphosphate. In terms of biological role, catalyzes the attachment of glutamate to tRNA(Glu) in a two-step reaction: glutamate is first activated by ATP to form Glu-AMP and then transferred to the acceptor end of tRNA(Glu). The polypeptide is Glutamate--tRNA ligase (Carboxydothermus hydrogenoformans (strain ATCC BAA-161 / DSM 6008 / Z-2901)).